The sequence spans 1052 residues: Eukaryotic translation initiation factor 3 subunit A (1052 aa).

One can recognise a PCI domain in the interval 325–505 (IQYAASAVLL…GSLHFNNNIF (181 aa)). 2 coiled-coil regions span residues 568–712 (REHV…RLRE) and 769–882 (EKTA…SAQT). Composition is skewed to basic and acidic residues over residues 570 to 600 (HVSN…EQMQ) and 793 to 874 (KIRL…EQEK). 2 disordered regions span residues 570 to 606 (HVSN…HQNQ) and 793 to 1052 (KIRL…DDKN). 2 stretches are compositionally biased toward polar residues: residues 875-887 (LSNL…QPTW) and 895-906 (APTTAAPSSMRV). 4 stretches are compositionally biased toward basic and acidic residues: residues 942 to 952 (DRGDRAPRDTG), 960 to 970 (DRGDRAPRDTG), 979 to 1013 (RAPR…ERRA), and 1037 to 1052 (GSER…DDKN).

The protein belongs to the eIF-3 subunit A family. Component of the eukaryotic translation initiation factor 3 (eIF-3) complex.

The protein localises to the cytoplasm. In terms of biological role, RNA-binding component of the eukaryotic translation initiation factor 3 (eIF-3) complex, which is involved in protein synthesis of a specialized repertoire of mRNAs and, together with other initiation factors, stimulates binding of mRNA and methionyl-tRNAi to the 40S ribosome. The eIF-3 complex specifically targets and initiates translation of a subset of mRNAs involved in cell proliferation. The chain is Eukaryotic translation initiation factor 3 subunit A from Monosiga brevicollis (Choanoflagellate).